Here is a 309-residue protein sequence, read N- to C-terminus: Mitochondrial import receptor subunit TOM34 (309 aa).

Ser-8 carries the phosphoserine modification. TPR repeat units lie at residues 9–42 (VEQL…LQAR), 51–84 (SVLY…VPFS), and 86–118 (KPLL…DNSV). Positions 158–187 (WSSLPSENHKETAKSKSKETTATKNRVPSA) are disordered. Residue Ser-160 is modified to Phosphoserine. Basic and acidic residues predominate over residues 164 to 178 (ENHKETAKSKSKETT). Ser-186 is modified (phosphoserine). 3 TPR repeats span residues 193-226 (ARVL…SSLE), 227-260 (SATY…DGKN), and 262-294 (KAFY…EPRN). Lys-197 participates in a covalent cross-link: Glycyl lysine isopeptide (Lys-Gly) (interchain with G-Cter in SUMO2).

Belongs to the Tom34 family. As to quaternary structure, interacts with HSP90A, VCP, ATP6V1D, KIAA0665, AMPK, and DMAP1 through its TPR repeat.

The protein resides in the cytoplasm. It localises to the mitochondrion outer membrane. Its function is as follows. Plays a role in the import of cytosolically synthesized preproteins into mitochondria. Binds the mature portion of precursor proteins. Interacts with cellular components, and possesses weak ATPase activity. May be a chaperone-like protein that helps to keep newly synthesized precursors in an unfolded import compatible state. The protein is Mitochondrial import receptor subunit TOM34 (Tomm34) of Rattus norvegicus (Rat).